The primary structure comprises 204 residues: dITP/XTP pyrophosphatase (204 aa).

Residue 8-13 (SRNRKK) coordinates substrate. Catalysis depends on D73, which acts as the Proton acceptor. D73 provides a ligand contact to Mg(2+). Residues S74, 155 to 158 (FGYD), K179, and 184 to 185 (HR) contribute to the substrate site.

Belongs to the HAM1 NTPase family. In terms of assembly, homodimer. Mg(2+) serves as cofactor.

It carries out the reaction XTP + H2O = XMP + diphosphate + H(+). The enzyme catalyses dITP + H2O = dIMP + diphosphate + H(+). The catalysed reaction is ITP + H2O = IMP + diphosphate + H(+). In terms of biological role, pyrophosphatase that catalyzes the hydrolysis of nucleoside triphosphates to their monophosphate derivatives, with a high preference for the non-canonical purine nucleotides XTP (xanthosine triphosphate), dITP (deoxyinosine triphosphate) and ITP. Seems to function as a house-cleaning enzyme that removes non-canonical purine nucleotides from the nucleotide pool, thus preventing their incorporation into DNA/RNA and avoiding chromosomal lesions. This is dITP/XTP pyrophosphatase from Mycolicibacterium paratuberculosis (strain ATCC BAA-968 / K-10) (Mycobacterium paratuberculosis).